A 127-amino-acid polypeptide reads, in one-letter code: Small ribosomal subunit protein eS8 (127 aa).

A disordered region spans residues 1 to 33 (MAIWQGKSMKKPSGGRAKMNRGKRKYELGREPA).

Belongs to the eukaryotic ribosomal protein eS8 family. As to quaternary structure, part of the 30S ribosomal subunit.

This chain is Small ribosomal subunit protein eS8 (rps8e), found in Methanothermobacter thermautotrophicus (strain ATCC 29096 / DSM 1053 / JCM 10044 / NBRC 100330 / Delta H) (Methanobacterium thermoautotrophicum).